Consider the following 144-residue polypeptide: Large-conductance mechanosensitive channel (144 aa).

Transmembrane regions (helical) follow at residues 16–36 (VIDL…VDSV) and 86–106 (GNFL…FLMV).

It belongs to the MscL family. In terms of assembly, homopentamer.

It is found in the cell inner membrane. Functionally, channel that opens in response to stretch forces in the membrane lipid bilayer. May participate in the regulation of osmotic pressure changes within the cell. This Cupriavidus pinatubonensis (strain JMP 134 / LMG 1197) (Cupriavidus necator (strain JMP 134)) protein is Large-conductance mechanosensitive channel.